The chain runs to 60 residues: Cytotoxin SP15d (60 aa).

Intrachain disulfides connect Cys-3-Cys-21, Cys-14-Cys-38, Cys-42-Cys-53, and Cys-54-Cys-59.

This sequence belongs to the three-finger toxin family. Short-chain subfamily. Type IA cytotoxin sub-subfamily. As to quaternary structure, monomer in solution; Homodimer and oligomer in the presence of negatively charged lipids forming a pore with a size ranging between 20 and 30 Angstroms. As to expression, expressed by the venom gland.

The protein localises to the secreted. Its subcellular location is the target cell membrane. In terms of biological role, shows cytolytic activity on many different cells by forming pore in lipid membranes. In vivo, increases heart rate or kills the animal by cardiac arrest. In addition, it binds to heparin with high affinity, interacts with Kv channel-interacting protein 1 (KCNIP1) in a calcium-independent manner, and binds to integrin alpha-V/beta-3 (ITGAV/ITGB3) with moderate affinity. The polypeptide is Cytotoxin SP15d (Naja atra (Chinese cobra)).